The primary structure comprises 1958 residues: Echinoderm microtubule-associated protein-like 6 (1958 aa).

10 WD repeats span residues 59-100 (GHND…TVSI), 104-145 (VHTH…LLAS), 148-187 (GHSD…LTAK), 195-233 (GDLQ…RTIQ), 235-273 (AHSA…TKID), 280-321 (GYKG…LILQ), 323-362 (HCEG…LIAR), 364-403 (NMEE…EVVH), 406-445 (DRKE…KKIG), and 561-601 (GHSA…VSNG). A disordered region spans residues 604–627 (ETTPQEGGADSYSEESDSDFSDVP). Positions 615–627 (YSEESDSDFSDVP) are enriched in acidic residues. WD repeat units follow at residues 725-766 (GHDD…CLSL), 770-811 (HHQR…KIAT), 814-853 (GHKD…FTSK), 861-900 (GKLE…KTVK), 901-940 (AHDG…KTYA), 996-1035 (HMEG…RMLA), 1038-1077 (KLKK…DMLS), 1080-1120 (HRKE…RVGI), 1191-1230 (SDVT…QHAR), and 1236-1276 (GHSA…TQES). Over residues 1322–1337 (KPHQQLKEVSMEERPP) the composition is skewed to basic and acidic residues. The tract at residues 1322 to 1352 (KPHQQLKEVSMEERPPVSRAAPQPEKLQKNN) is disordered. WD repeat units follow at residues 1412–1456 (EHTD…TLSM), 1460–1501 (FHTK…KVAS), 1504–1543 (GHLE…LLYK), 1553–1591 (AKMQ…RLVA), 1593–1638 (AHTG…CRAF), 1685–1724 (HMEG…LLNK), 1726–1767 (NLGH…GKKR), 1768–1807 (DRKS…SLNR), 1880–1919 (ADKA…KFAK), and 1925–1958 (GHSA…WRCL).

This sequence belongs to the WD repeat EMAP family.

Its subcellular location is the cytoplasm. It localises to the cytoskeleton. Its function is as follows. May modify the assembly dynamics of microtubules, such that microtubules are slightly longer, but more dynamic. The chain is Echinoderm microtubule-associated protein-like 6 (Eml6) from Mus musculus (Mouse).